Consider the following 304-residue polypeptide: Cell division protein ZipA (304 aa).

Topologically, residues 1–5 are periplasmic; it reads MQDLR. The helical transmembrane segment at 6 to 26 threads the bilayer; the sequence is LILIVVGAIAIIALLLHGLWT. At 27–304 the chain is on the cytoplasmic side; it reads SRKERSSVFR…IRDVIDANSH (278 aa). The segment at 31 to 165 is disordered; it reads RSSVFRDRPH…PEPQSQPKQK (135 aa). Basic and acidic residues predominate over residues 121–132; sequence ARPETHKPDQPE. Residues 137-158 show a composition bias toward low complexity; it reads AAPAAAETAPAPAEPAQKTPEP.

It belongs to the ZipA family. As to quaternary structure, interacts with FtsZ via their C-terminal domains.

The protein localises to the cell inner membrane. In terms of biological role, essential cell division protein that stabilizes the FtsZ protofilaments by cross-linking them and that serves as a cytoplasmic membrane anchor for the Z ring. Also required for the recruitment to the septal ring of downstream cell division proteins. This is Cell division protein ZipA from Erwinia tasmaniensis (strain DSM 17950 / CFBP 7177 / CIP 109463 / NCPPB 4357 / Et1/99).